The primary structure comprises 309 residues: Methionyl-tRNA formyltransferase (309 aa).

107–110 (SLLP) provides a ligand contact to (6S)-5,6,7,8-tetrahydrofolate.

This sequence belongs to the Fmt family.

It carries out the reaction L-methionyl-tRNA(fMet) + (6R)-10-formyltetrahydrofolate = N-formyl-L-methionyl-tRNA(fMet) + (6S)-5,6,7,8-tetrahydrofolate + H(+). Functionally, attaches a formyl group to the free amino group of methionyl-tRNA(fMet). The formyl group appears to play a dual role in the initiator identity of N-formylmethionyl-tRNA by promoting its recognition by IF2 and preventing the misappropriation of this tRNA by the elongation apparatus. The protein is Methionyl-tRNA formyltransferase of Borrelia hermsii (strain HS1 / DAH).